Reading from the N-terminus, the 239-residue chain is 4-hydroxy-tetrahydrodipicolinate reductase (239 aa).

NAD(+) is bound by residues 12–17, 94–96, and 118–121; these read GASGRM, GTT, and ASNF. The Proton donor/acceptor role is filled by H150. H151 provides a ligand contact to (S)-2,3,4,5-tetrahydrodipicolinate. K154 acts as the Proton donor in catalysis. (S)-2,3,4,5-tetrahydrodipicolinate is bound at residue 160-161; it reads GT.

It belongs to the DapB family.

It is found in the cytoplasm. It catalyses the reaction (S)-2,3,4,5-tetrahydrodipicolinate + NAD(+) + H2O = (2S,4S)-4-hydroxy-2,3,4,5-tetrahydrodipicolinate + NADH + H(+). The catalysed reaction is (S)-2,3,4,5-tetrahydrodipicolinate + NADP(+) + H2O = (2S,4S)-4-hydroxy-2,3,4,5-tetrahydrodipicolinate + NADPH + H(+). Its pathway is amino-acid biosynthesis; L-lysine biosynthesis via DAP pathway; (S)-tetrahydrodipicolinate from L-aspartate: step 4/4. Functionally, catalyzes the conversion of 4-hydroxy-tetrahydrodipicolinate (HTPA) to tetrahydrodipicolinate. The chain is 4-hydroxy-tetrahydrodipicolinate reductase from Stenotrophomonas maltophilia (strain K279a).